The primary structure comprises 407 residues: Flagellar calcium-binding protein TB-44A (407 aa).

A disordered region spans residues 1–27 (MGCSASKDTTNSKDGAASKGGKDGKTT). The 2 X 186 AA almost perfect repeats stretch occupies residues 25-399 (KTTADRKVAW…LQVCGDPDGE (375 aa)). Positions 48-83 (ESKSRRIELFKRFDTNGTGKLSFREVLDGCYSILKL) constitute an EF-hand 1 domain. Ca(2+)-binding residues include D61, N63, T65, K67, and E72. The interval 110-121 (GVGEEDLVEFLE) is ancestral calcium site 2. EF-hand domains are found at residues 130–165 (YDIF…WKEW), 167–202 (VDIT…KKLQ), and 237–272 (ESKS…ILKL). Residues D143, D145, S147, E154, D180, N182, S184, E191, D250, N252, T254, K256, and E261 each coordinate Ca(2+). The ancestral calcium site 6 stretch occupies residues 299–310 (GVGEEDLVEFLE). 2 consecutive EF-hand domains span residues 319 to 354 (YDIF…WKEW) and 356 to 391 (VDIT…KKLQ). Positions 332, 334, 336, 343, 369, 371, 373, and 380 each coordinate Ca(2+).

The protein belongs to the calflagin family.

Its subcellular location is the cell projection. It localises to the cilium. The protein localises to the flagellum. In terms of biological role, may contribute to the rapid motility of the trypanosomes, playing a role either in flagellar structure or in calcium metabolism. Could alternate between a GDP-bound inactive form to a calcium/GTP-bound active form. This chain is Flagellar calcium-binding protein TB-44A, found in Trypanosoma brucei brucei.